Consider the following 761-residue polypeptide: Phosphoribosylformylglycinamidine synthase subunit PurL (761 aa).

His-48 is an active-site residue. 2 residues coordinate ATP: Tyr-51 and Lys-90. Residue Glu-92 coordinates Mg(2+). Substrate is bound by residues 93–96 (SHNH) and Arg-115. His-94 serves as the catalytic Proton acceptor. Asp-116 contributes to the Mg(2+) binding site. Gln-239 serves as a coordination point for substrate. Asp-267 is a Mg(2+) binding site. Residue 311–313 (ESQ) coordinates substrate. ATP-binding residues include Asp-499 and Gly-536. Mg(2+) is bound at residue Asn-537. Residue Ser-539 coordinates substrate.

The protein belongs to the FGAMS family. As to quaternary structure, monomer. Part of the FGAM synthase complex composed of 1 PurL, 1 PurQ and 2 PurS subunits.

It is found in the cytoplasm. It catalyses the reaction N(2)-formyl-N(1)-(5-phospho-beta-D-ribosyl)glycinamide + L-glutamine + ATP + H2O = 2-formamido-N(1)-(5-O-phospho-beta-D-ribosyl)acetamidine + L-glutamate + ADP + phosphate + H(+). The protein operates within purine metabolism; IMP biosynthesis via de novo pathway; 5-amino-1-(5-phospho-D-ribosyl)imidazole from N(2)-formyl-N(1)-(5-phospho-D-ribosyl)glycinamide: step 1/2. Its function is as follows. Part of the phosphoribosylformylglycinamidine synthase complex involved in the purines biosynthetic pathway. Catalyzes the ATP-dependent conversion of formylglycinamide ribonucleotide (FGAR) and glutamine to yield formylglycinamidine ribonucleotide (FGAM) and glutamate. The FGAM synthase complex is composed of three subunits. PurQ produces an ammonia molecule by converting glutamine to glutamate. PurL transfers the ammonia molecule to FGAR to form FGAM in an ATP-dependent manner. PurS interacts with PurQ and PurL and is thought to assist in the transfer of the ammonia molecule from PurQ to PurL. The sequence is that of Phosphoribosylformylglycinamidine synthase subunit PurL from Thermosynechococcus vestitus (strain NIES-2133 / IAM M-273 / BP-1).